The chain runs to 24 residues: Humanin-like 7 (24 aa).

This sequence belongs to the humanin family. In terms of tissue distribution, expressed in testis.

It localises to the secreted. Its subcellular location is the cytoplasm. Plays a role as a neuroprotective and antiapoptotic factor. The polypeptide is Humanin-like 7 (Homo sapiens (Human)).